Consider the following 400-residue polypeptide: Involucrin (400 aa).

3 disordered regions span residues 1 to 196, 273 to 312, and 333 to 381; these read MSQQ…HLKQ, KEEV…EQQL, and KRDE…KGEV. Low complexity-rich tracts occupy residues 78-159, 169-186, and 279-292; these read QQQQ…QQHQ, EQQQ…GQQE, and EQQQ…QQHQ. The span at 333–344 shows a compositional bias: basic and acidic residues; sequence KRDEQLGKKEEQ. Residues 346 to 358 show a composition bias toward low complexity; it reads LEPSEQQEGLLEQ.

Belongs to the involucrin family. Directly or indirectly cross-linked to cornifelin (CNFN). Substrate of transglutaminase. Specific glutamines or lysines are cross-linked to keratins, desmoplakin and to inter involucrin molecules. As to expression, keratinocytes of epidermis and other stratified squamous epithelia.

Its subcellular location is the cytoplasm. Functionally, part of the insoluble cornified cell envelope (CE) of stratified squamous epithelia. This chain is Involucrin (IVL), found in Tupaia glis (Common tree shrew).